Here is a 302-residue protein sequence, read N- to C-terminus: Pantothenate synthetase (302 aa).

ATP is bound at residue 47–54; that stretch reads MGALHEGH. His54 functions as the Proton donor in the catalytic mechanism. Gln79 serves as a coordination point for (R)-pantoate. Beta-alanine is bound at residue Gln79. 165–168 serves as a coordination point for ATP; sequence GEKD. Gln171 is a (R)-pantoate binding site. ATP-binding positions include Val194 and 202–205; that span reads LSSR.

It belongs to the pantothenate synthetase family. In terms of assembly, homodimer.

Its subcellular location is the cytoplasm. It catalyses the reaction (R)-pantoate + beta-alanine + ATP = (R)-pantothenate + AMP + diphosphate + H(+). It participates in cofactor biosynthesis; (R)-pantothenate biosynthesis; (R)-pantothenate from (R)-pantoate and beta-alanine: step 1/1. In terms of biological role, catalyzes the condensation of pantoate with beta-alanine in an ATP-dependent reaction via a pantoyl-adenylate intermediate. This is Pantothenate synthetase from Saccharopolyspora erythraea (strain ATCC 11635 / DSM 40517 / JCM 4748 / NBRC 13426 / NCIMB 8594 / NRRL 2338).